The following is a 599-amino-acid chain: MTQLDLIRNFSIVAHIDHGKSTLADRLIQLTGTVAERDMKAQILDSMEIERERGITIKANTVRIEYPAKDGKTYVLNLIDTPGHVDFAYEVSRSMRAVEGSLLVVDASQGVEAQTLANVYQALDAGHEIVPVLNKIDLPAAEPDRVRTQIEDVIGLDASDAVLISAKSGLGIPDVLEAIVTRLPPPKGNREAPLKAMLVDSWYDAYLGVVVMIRVMDGVIRKGDRVKMMQTGAVYGIDRLAVLKPQMVDIAELGPGEIGVLTASIKQVRDTRVGDTITHEKKGCEAPLPGFKPAQPVVFCGLFPVDANDFEGLREAIEKLALNDASFTYEMETSAALGFGFRCGFLGLLHLEVVRDRLEREYDLDLITTAPSVVYQIYMRDGTVQELHNPTDMPDLTLVDHIEEPRIRATIMVPDEYLGDVLKLCQDRRGIQLDLSYAGSRAMVVYDLPLNEVVFDFYDRLKSVTKGYASFDYQITGYREDFLVKMSILVNDEPVDALSMMVHRDRADLRGRAMVEKLKELIPRHMFKIPIQAAIGGRVIARETISAMRKDVTAKCYGGDATRKRKLLDKQKAGKKKMRQFGKVEIPQQAFINALKMDS.

A tr-type G domain is found at 5-187 (DLIRNFSIVA…AIVTRLPPPK (183 aa)). GTP contacts are provided by residues 17–22 (DHGKST) and 134–137 (NKID).

It belongs to the TRAFAC class translation factor GTPase superfamily. Classic translation factor GTPase family. LepA subfamily.

The protein resides in the cell inner membrane. It carries out the reaction GTP + H2O = GDP + phosphate + H(+). Its function is as follows. Required for accurate and efficient protein synthesis under certain stress conditions. May act as a fidelity factor of the translation reaction, by catalyzing a one-codon backward translocation of tRNAs on improperly translocated ribosomes. Back-translocation proceeds from a post-translocation (POST) complex to a pre-translocation (PRE) complex, thus giving elongation factor G a second chance to translocate the tRNAs correctly. Binds to ribosomes in a GTP-dependent manner. This Cereibacter sphaeroides (strain ATCC 17025 / ATH 2.4.3) (Rhodobacter sphaeroides) protein is Elongation factor 4.